The primary structure comprises 398 residues: Acetate kinase (398 aa).

Residue N8 participates in Mg(2+) binding. Residue K15 coordinates ATP. R92 contacts substrate. D149 acts as the Proton donor/acceptor in catalysis. ATP contacts are provided by residues 209–213, 283–285, and 331–335; these read HLGNG, DFR, and GVGEN. Residue E385 coordinates Mg(2+).

It belongs to the acetokinase family. Homodimer. Mg(2+) is required as a cofactor. It depends on Mn(2+) as a cofactor.

It localises to the cytoplasm. It carries out the reaction acetate + ATP = acetyl phosphate + ADP. The protein operates within metabolic intermediate biosynthesis; acetyl-CoA biosynthesis; acetyl-CoA from acetate: step 1/2. In terms of biological role, catalyzes the formation of acetyl phosphate from acetate and ATP. Can also catalyze the reverse reaction. In Corynebacterium efficiens (strain DSM 44549 / YS-314 / AJ 12310 / JCM 11189 / NBRC 100395), this protein is Acetate kinase.